Consider the following 212-residue polypeptide: Uridine kinase (212 aa).

Residue 13-20 (GGSGSGKT) coordinates ATP.

Belongs to the uridine kinase family.

Its subcellular location is the cytoplasm. It catalyses the reaction uridine + ATP = UMP + ADP + H(+). The enzyme catalyses cytidine + ATP = CMP + ADP + H(+). It participates in pyrimidine metabolism; CTP biosynthesis via salvage pathway; CTP from cytidine: step 1/3. Its pathway is pyrimidine metabolism; UMP biosynthesis via salvage pathway; UMP from uridine: step 1/1. This is Uridine kinase from Bacillus cereus (strain G9842).